The primary structure comprises 603 residues: Prosaposin receptor GPR37 (603 aa).

Residues 1 to 26 (MPAPGAPLSRTSRLLLLLLFKVSVSA) form the signal peptide. Topologically, residues 27–255 (ALSFVPEPRN…QESYGAYAVM (229 aa)) are extracellular. The N-linked (GlcNAc...) asparagine glycan is linked to N36. The interval 39-232 (CLGESCSPLI…GGPRRGNSTN (194 aa)) is disordered. 3 stretches are compositionally biased toward basic and acidic residues: residues 51–79 (RSRDAGGPRNSARDALRVHVPREKLEAEV), 145–158 (TSERGEMSSKRDEI), and 165–175 (HSVKTEPEPRD). N212 and N229 each carry an N-linked (GlcNAc...) asparagine glycan. A helical membrane pass occupies residues 256–276 (CLSVVIFGTGIIGNLAVMCIV). Residues 277-289 (CHNYYMRSISNSL) lie on the Cytoplasmic side of the membrane. A helical membrane pass occupies residues 290–310 (LANLAFWDFLIIFFCLPLVIF). At 311–325 (HELTKKWLLEDFSCK) the chain is on the extracellular side. An intrachain disulfide couples C324 to C409. Residues 326–346 (IVPYIEVASLGVTTFTLCALC) form a helical membrane-spanning segment. The Cytoplasmic segment spans residues 347 to 369 (IDRFRAATNVQMYYEMIENCSST). The helical transmembrane segment at 370-390 (TAKLAVIWVGALLLALPEVVL) threads the bilayer. Residues 391–433 (RQLSKEDLGFSGQAPAERCVIKISPDLPDTIYVLALTYDGARL) are Extracellular-facing. The helical transmembrane segment at 434–454 (WWYFGCYFCLPTLFTITCSLV) threads the bilayer. Residues 455–483 (TARKIRKAEKASTRGNKRQIHLESQMNCT) are Cytoplasmic-facing. Residues 484–504 (VVALTILYGFCIIPENICNIV) traverse the membrane as a helical segment. Residues 505–521 (TAYMATGVSQQTMDLLN) are Extracellular-facing. Residues 522–542 (IISQFLLFFKSCVTPVLLFCL) form a helical membrane-spanning segment. Residues 543–603 (CRPFSRAFME…STFASVGTHC (61 aa)) lie on the Cytoplasmic side of the membrane.

This sequence belongs to the G-protein coupled receptor 1 family. As to quaternary structure, forms a complex with PRKN, STUB1 and HSP70. The amount of STUB1 in the complex increases during ER stress. STUB1 promotes the dissociation of HSP70 from PRKN, thus facilitating PRKN-mediated GPR37 ubiquitination. Interacts with PACRG. The N-terminus is cleaved by ADAM10 metalloproteinase; mediating limited proteolysis leading to the release of receptor ectodomain by shedding. In addition, cleaved by FURIN between Arg-53 and Asp-54. In terms of processing, ubiquitinated by PRKN in the presence of UBE2E1 and UBE2L3 in the endoplasmic reticulum. The unfolded form is specifically ubiquitinated by SYVN1, which promotes its proteasomal degradation and prevents neuronal cell death. As to expression, highly expressed in the brain. High levels of expression were seen in fiber tracts such as the corpus callosum, anterior commissure, fornix, internal capsule, cerebral peduncles, and stria terminalis. Additionally, moderate levels of expression were seen in the pyramidal tracts and cerebellar peduncles, as well as in the spinal tract of the trigeminal nerve and the spinal fasciculi.

The protein localises to the cell projection. The protein resides in the dendrite. It is found in the synapse. It localises to the cell membrane. Its subcellular location is the endoplasmic reticulum membrane. In terms of biological role, G-protein-coupled receptor that plays a role in several physiological pathways such as resolution of inflammatory pain and oligodendrocyte differentiation. Acts as a receptor for several ligands including prosaposin, osteocalcin or neuroprotectin D1. Ligand binding induces endocytosis, followed by an ERK phosphorylation cascade. Acts as a receptor for osteocalcin (OCN) to regulate oligodendrocyte differentiation and central nervous system myelination. Mechanistically, plays a negative role in oligodendrocyte differentiation and myelination during development via activation of the ERK1/2 signaling pathway. Therefore, regulates the stability of myelin or resistance of myelin itself to demyelination. Upon activation by neuroprotectin D1 (NPD1), promotes the activation of phagocytosis in macrophages as well as the shift in cytokine release toward an anti-inflammatory profile, and thus helps to reverse inflammatory pain. In addition, the increased macrophage phagocytosis mediates protection against sepsis upon pathogen infection. Additionally, extracellular vesicles derived from efferocyte express prosaposin, which binds to macrophage GPR37 to increase expression of the efferocytosis receptor TIM4 via an ERK-AP1-dependent signaling axis, leading to increased macrophage efferocytosis efficiency and accelerated resolution of inflammation. May also act as a maturation factor of LRP6, protecting LRP6 from the endoplasmic reticulum (ER)-associated protein degradation (ERAD) and thereby promoting the Wnt/beta-catenin signaling pathway. This is Prosaposin receptor GPR37 (Gpr37) from Rattus norvegicus (Rat).